Reading from the N-terminus, the 364-residue chain is GDSL esterase/lipase EXL3 (364 aa).

An N-terminal signal peptide occupies residues 1 to 32; sequence MKDNSSWSCSCSWSSWKICLLSVLFLTETITA. Serine 50 serves as the catalytic Nucleophile. Residues aspartate 339 and histidine 342 contribute to the active site.

The protein belongs to the 'GDSL' lipolytic enzyme family. As to expression, flower buds.

It is found in the secreted. The protein is GDSL esterase/lipase EXL3 (EXL3) of Arabidopsis thaliana (Mouse-ear cress).